Here is a 153-residue protein sequence, read N- to C-terminus: Small ribosomal subunit protein eS19 (153 aa).

The protein belongs to the eukaryotic ribosomal protein eS19 family. As to quaternary structure, part of the 30S ribosomal subunit.

Its function is as follows. May be involved in maturation of the 30S ribosomal subunit. The chain is Small ribosomal subunit protein eS19 from Aeropyrum pernix (strain ATCC 700893 / DSM 11879 / JCM 9820 / NBRC 100138 / K1).